A 292-amino-acid polypeptide reads, in one-letter code: 2-methylisocitrate lyase (292 aa).

44-46 is a binding site for substrate; that stretch reads SGA. Residues D84 and D86 each coordinate Mg(2+). Substrate contacts are provided by residues 121–122, R156, E186, 208–210, R239, and R268; these read CG and NMT.

The protein belongs to the isocitrate lyase/PEP mutase superfamily. Methylisocitrate lyase family. Homotetramer; dimer of dimers. Requires Mg(2+) as cofactor.

The enzyme catalyses (2S,3R)-3-hydroxybutane-1,2,3-tricarboxylate = pyruvate + succinate. Its pathway is organic acid metabolism; propanoate degradation. In terms of biological role, involved in the catabolism of short chain fatty acids (SCFA) via the 2-methylcitrate cycle I (propionate degradation route). Catalyzes the thermodynamically favored C-C bond cleavage of (2R,3S)-2-methylisocitrate to yield pyruvate and succinate via an alpha-carboxy-carbanion intermediate. The chain is 2-methylisocitrate lyase from Shewanella oneidensis (strain ATCC 700550 / JCM 31522 / CIP 106686 / LMG 19005 / NCIMB 14063 / MR-1).